Reading from the N-terminus, the 346-residue chain is Coproporphyrin III ferrochelatase (346 aa).

Residues serine 52 and tyrosine 121 each coordinate Fe-coproporphyrin III. Residues histidine 181 and glutamate 264 each contribute to the Fe(2+) site.

It belongs to the ferrochelatase family.

The protein localises to the cytoplasm. The catalysed reaction is Fe-coproporphyrin III + 2 H(+) = coproporphyrin III + Fe(2+). The protein operates within porphyrin-containing compound metabolism; protoheme biosynthesis. In terms of biological role, involved in coproporphyrin-dependent heme b biosynthesis. Catalyzes the insertion of ferrous iron into coproporphyrin III to form Fe-coproporphyrin III. This Mycobacterium sp. (strain KMS) protein is Coproporphyrin III ferrochelatase.